A 300-amino-acid polypeptide reads, in one-letter code: Ribonuclease HIII (300 aa).

The RNase H type-2 domain maps to 86–300 (RPRLGVDESG…FNEICDSASA (215 aa)). Positions 92, 93, and 196 each coordinate a divalent metal cation.

This sequence belongs to the RNase HII family. RnhC subfamily. The cofactor is Mn(2+). Mg(2+) is required as a cofactor.

The protein localises to the cytoplasm. It carries out the reaction Endonucleolytic cleavage to 5'-phosphomonoester.. Functionally, endonuclease that specifically degrades the RNA of RNA-DNA hybrids. This chain is Ribonuclease HIII, found in Chlamydia caviae (strain ATCC VR-813 / DSM 19441 / 03DC25 / GPIC) (Chlamydophila caviae).